Consider the following 216-residue polypeptide: Uracil phosphoribosyltransferase (216 aa).

Residues R85, R110, and 135–143 (DPMVATGYS) each bind 5-phospho-alpha-D-ribose 1-diphosphate. Uracil contacts are provided by residues I200 and 205–207 (GDA). D206 contributes to the 5-phospho-alpha-D-ribose 1-diphosphate binding site.

This sequence belongs to the UPRTase family. Mg(2+) is required as a cofactor.

The enzyme catalyses UMP + diphosphate = 5-phospho-alpha-D-ribose 1-diphosphate + uracil. The protein operates within pyrimidine metabolism; UMP biosynthesis via salvage pathway; UMP from uracil: step 1/1. With respect to regulation, allosterically activated by GTP. Catalyzes the conversion of uracil and 5-phospho-alpha-D-ribose 1-diphosphate (PRPP) to UMP and diphosphate. This chain is Uracil phosphoribosyltransferase, found in Paraburkholderia phymatum (strain DSM 17167 / CIP 108236 / LMG 21445 / STM815) (Burkholderia phymatum).